The primary structure comprises 268 residues: Ribonuclease P protein subunit p30 (268 aa).

Ala-2 bears the N-acetylalanine mark. Ser-251 is modified (phosphoserine).

Belongs to the eukaryotic/archaeal RNase P protein component 3 family. In terms of assembly, component of nuclear RNase P and RNase MRP ribonucleoproteins. RNase P consists of a catalytic RNA moiety and about 10 protein subunits; POP1, POP4, POP5, POP7, RPP14, RPP21, RPP25, RPP30, RPP38 and RPP40. Within the RNase P complex, POP1, POP7 and RPP25 form the 'finger' subcomplex, POP5, RPP14, RPP40 and homodimeric RPP30 form the 'palm' subcomplex, and RPP21, POP4 and RPP38 form the 'wrist' subcomplex. All subunits of the RNase P complex interact with the catalytic RNA. Several subunits of RNase P are also part of the RNase MRP complex. RNase MRP consists of a catalytic RNA moiety and about 8 protein subunits; POP1, POP7, RPP25, RPP30, RPP38, RPP40 and possibly also POP4 and POP5.

The protein localises to the nucleus. Its subcellular location is the nucleolus. Functionally, component of ribonuclease P, a ribonucleoprotein complex that generates mature tRNA molecules by cleaving their 5'-ends. Also a component of the MRP ribonuclease complex, which cleaves pre-rRNA sequences. The protein is Ribonuclease P protein subunit p30 (RPP30) of Bos taurus (Bovine).